An 841-amino-acid chain; its full sequence is Toll-like receptor 4 (841 aa).

The first 23 residues, 1–23 (MIPRIRLAVATIPAMAFLSCLRS), serve as a signal peptide directing secretion. Over 24–632 (ESWDPCVQVV…FRNATCQISE (609 aa)) the chain is Extracellular. A disulfide bond links C29 and C40. Residue N35 is glycosylated (N-linked (GlcNAc...) asparagine). LRR repeat units follow at residues 55-76 (SVKILDLSFNYLSHLDSNSFSS), 79-100 (ELQVLDLSRCEIQTIDDDAYQG), 103-124 (YLSTLILTGNPIQSLALGAFSG), 127-148 (SLQKLVAVETNLASLEDFPIGH), 151-172 (TLNELNVAHNHIHSFKLPEYFS), 176-197 (NLEHLDLSKNKIENIYHEHLQV), and 205-225 (NLSLDLSLNPLNFIEPGAFNK). N-linked (GlcNAc...) asparagine glycans are attached at residues N205, N238, N282, and N309. C281 and C306 are joined by a disulfide. LRR repeat units lie at residues 374–395 (NLQFLDLSGNHLSFKGCCSHNE), 400–422 (KLKHLDLSFNEIITMKSNFMGLE), 423–444 (QLEYLDFQHSSLKQANDFSIFL), 448–469 (NLHYLDISYTNIHVVFRGIFAG), 472–495 (SLQTLKMAGNSFQNNLLPDVFTDL), 497–518 (NLILLDLSKCQLEQVSQRAFHS), 521–542 (RLQVLNMSHNRLLFLDTLPYKP), and 545–568 (SLRILDCSYNLIVASKEQELQHLP). A disulfide bridge connects residues C390 and C391. N-linked (GlcNAc...) asparagine glycosylation is present at N526. N575 carries N-linked (GlcNAc...) asparagine glycosylation. In terms of domain architecture, LRRCT spans 579-630 (NDFSCACEHQTFLQWVKDQKQLLVGAEQMVCTQPLEMQDLPVLSFRNATCQI). Intrachain disulfides connect C583/C609 and C585/C628. A glycan (N-linked (GlcNAc...) asparagine) is linked at N625. A helical transmembrane segment spans residues 633 to 653 (AVISASVLTFLLVSVAGILVY). Over 654–841 (KFYFHLLLFV…SNQHDTTAFT (188 aa)) the chain is Cytoplasmic. The TIR domain maps to 673–816 (STYDAFVIYS…IFWRRLKKAL (144 aa)).

Belongs to the Toll-like receptor family. In terms of assembly, belongs to the lipopolysaccharide (LPS) receptor, a multi-protein complex containing at least CD14, LY96 and TLR4. Binding to bacterial LPS leads to homodimerization. Interacts with LY96 via the extracellular domain. Interacts with MYD88 and TIRAP via their respective TIR domains. Interacts with NOX4. Interacts with CNPY3 and HSP90B1; this interaction is required for proper folding in the endoplasmic reticulum. Interacts with MAP3K21; this interaction leads to negative regulation of TLR4 signaling. Interacts with CD36, following CD36 stimulation by oxLDL or amyloid-beta 42, and forms a heterodimer with TLR6. The trimeric complex is internalized and triggers inflammatory response. LYN kinase activity facilitates TLR4-TLR6 heterodimerization and signal initiation. Interacts with TICAM1 in response to LPS in a WDFY1-dependent manner. Interacts with WDFY1 in response to LPS. Interacts with SMPDL3B. Interacts with CEACAM1; upon lipopolysaccharide stimulation, forms a complex including TLR4 and the phosphorylated form of SYK and CEACAM1, which in turn, recruits PTPN6 that dephosphorylates SYK, reducing the production of reactive oxygen species (ROS) and lysosome disruption, which in turn, reduces the activity of the inflammasome. Interacts with RFTN1; the interaction occurs in response to lipopolysaccharide stimulation. Interacts with SCIMP; the interaction occurs in response to lipopolysaccharide stimulation and is enhanced by phosphorylation of SCIMP by LYN. This interaction facilitates the phosphorylation of TLR4 by LYN which elicits a selective cytokine response in macrophages. Interacts with TRAF3IP3. Interacts with TREM1; this interaction enhances TLR4-mediated inflammatory response. Interacts with ZG16B/PAUF. Interacts with CD82; this interaction inhibits TLR4-mediated signaling pathway. Post-translationally, phosphorylated on tyrosine residues by LYN after binding lipopolysaccharide. In terms of processing, ubiquitinated by RNF128 via 'Lys-28'-linked polyubiquitin chains, leading to proteasomal degradation.

The protein localises to the cell membrane. Its subcellular location is the early endosome. It localises to the cell projection. It is found in the ruffle. In terms of biological role, transmembrane receptor that functions as a pattern recognition receptor recognizing pathogen- and damage-associated molecular patterns (PAMPs and DAMPs) to induce innate immune responses via downstream signaling pathways. At the plasma membrane, cooperates with LY96 to mediate the innate immune response to bacterial lipopolysaccharide (LPS). Also involved in LPS-independent inflammatory responses triggered by free fatty acids, such as palmitate, and Ni(2+). Mechanistically, acts via MYD88, TIRAP and TRAF6, leading to NF-kappa-B activation, cytokine secretion and the inflammatory response. Alternatively, CD14-mediated TLR4 internalization via endocytosis is associated with the initiation of a MYD88-independent signaling via the TICAM1-TBK1-IRF3 axis leading to type I interferon production. In addition to the secretion of proinflammatory cytokines, initiates the activation of NLRP3 inflammasome and formation of a positive feedback loop between autophagy and NF-kappa-B signaling cascade. In complex with TLR6, promotes inflammation in monocytes/macrophages by associating with TLR6 and the receptor CD86. Upon ligand binding, such as oxLDL or amyloid-beta 42, the TLR4:TLR6 complex is internalized and triggers inflammatory response, leading to NF-kappa-B-dependent production of CXCL1, CXCL2 and CCL9 cytokines, via MYD88 signaling pathway, and CCL5 cytokine, via TICAM1 signaling pathway. In myeloid dendritic cells, vesicular stomatitis virus glycoprotein G but not LPS promotes the activation of IRF7, leading to type I IFN production in a CD14-dependent manner. The sequence is that of Toll-like receptor 4 (TLR4) from Sus scrofa (Pig).